Reading from the N-terminus, the 385-residue chain is UDP-N-acetylglucosamine--N-acetylmuramyl-(pentapeptide) pyrophosphoryl-undecaprenol N-acetylglucosamine transferase (385 aa).

Residues 24–26 (TAG), Asn-143, Arg-180, Ser-214, and Gln-310 contribute to the UDP-N-acetyl-alpha-D-glucosamine site.

The protein belongs to the glycosyltransferase 28 family. MurG subfamily.

The protein resides in the cell membrane. The catalysed reaction is di-trans,octa-cis-undecaprenyl diphospho-N-acetyl-alpha-D-muramoyl-L-alanyl-D-glutamyl-meso-2,6-diaminopimeloyl-D-alanyl-D-alanine + UDP-N-acetyl-alpha-D-glucosamine = di-trans,octa-cis-undecaprenyl diphospho-[N-acetyl-alpha-D-glucosaminyl-(1-&gt;4)]-N-acetyl-alpha-D-muramoyl-L-alanyl-D-glutamyl-meso-2,6-diaminopimeloyl-D-alanyl-D-alanine + UDP + H(+). The protein operates within cell wall biogenesis; peptidoglycan biosynthesis. Functionally, cell wall formation. Catalyzes the transfer of a GlcNAc subunit on undecaprenyl-pyrophosphoryl-MurNAc-pentapeptide (lipid intermediate I) to form undecaprenyl-pyrophosphoryl-MurNAc-(pentapeptide)GlcNAc (lipid intermediate II). The polypeptide is UDP-N-acetylglucosamine--N-acetylmuramyl-(pentapeptide) pyrophosphoryl-undecaprenol N-acetylglucosamine transferase (Mycolicibacterium smegmatis (strain ATCC 700084 / mc(2)155) (Mycobacterium smegmatis)).